We begin with the raw amino-acid sequence, 284 residues long: Homeobox protein CDX-4 (284 aa).

Disordered regions lie at residues 15–40 and 120–155; these read PGTL…SPMP and GGGT…SRHS. Positions 22–37 are enriched in gly residues; sequence GGDGTAGTGGTGGGGS. The homeobox DNA-binding region spans 173-232; it reads KEKYRVVYTDHQRLELEKEFHCNRYITIQRKSELAVNLGLSERQVKIWFQNRRAKERKMI. Residues 238–253 are compositionally biased toward polar residues; the sequence is QFENSGGSVQSDSDSI. Residues 238–259 are disordered; sequence QFENSGGSVQSDSDSISPGELP.

This sequence belongs to the Caudal homeobox family.

It localises to the nucleus. In Homo sapiens (Human), this protein is Homeobox protein CDX-4 (CDX4).